A 444-amino-acid chain; its full sequence is MVLDNLGGSLRGALKKIASATRVDKALVDDAVRDIQRALLQADVNVKLVMSLSNRIRERALNEKPPAGMNPREHVINIVYQELINLIGRGTDIPLKKQTIMLVGLQGSGKTTTAAKLATYFQRRGLRTAVICADTFRAGAYDQLKALCDRQGIFFYGEKGNENAPEVAKNGLEATKKYDVRIVDTAGRHALESDLIQEMKDIHAVVNADHKLLVMDAAIGQQASEQARAFNEAVGITGVIITKLDGTAKGGGALSAVAETKTSVAFIGVGETASDLEKFEADRFISRLLGMGDIKGLIEKAQEVQIESDVDVDAMMKGKFTLKDMYKQLEAMNKMGPLKQIMQMLPFGGIGIELSDKEYQVTKERLEAYRFIMDSMTDEELEDPKIINASRIKRIARGSGTRPELVKELLKSHAAMQKAIKGMRGGMGRMNMKKLMKRLGQPKV.

GTP-binding positions include 104 to 111 (GLQGSGKT), 184 to 188 (DTAGR), and 242 to 245 (TKLD).

The protein belongs to the GTP-binding SRP family. SRP54 subfamily. Part of the signal recognition particle protein translocation system, which is composed of SRP and FtsY. Archaeal SRP consists of a 7S RNA molecule of 300 nucleotides and two protein subunits: SRP54 and SRP19.

The protein localises to the cytoplasm. It catalyses the reaction GTP + H2O = GDP + phosphate + H(+). Its function is as follows. Involved in targeting and insertion of nascent membrane proteins into the cytoplasmic membrane. Binds to the hydrophobic signal sequence of the ribosome-nascent chain (RNC) as it emerges from the ribosomes. The SRP-RNC complex is then targeted to the cytoplasmic membrane where it interacts with the SRP receptor FtsY. This Methanothrix thermoacetophila (strain DSM 6194 / JCM 14653 / NBRC 101360 / PT) (Methanosaeta thermophila) protein is Signal recognition particle 54 kDa protein.